We begin with the raw amino-acid sequence, 237 residues long: Neurogenin-1 (237 aa).

The tract at residues 35-83 is disordered; the sequence is LQQAASASGPPAPARRGAPNISRASEVPGAQDDEQERRRRRGRTRVRSE. The span at 38–53 shows a compositional bias: low complexity; sequence AASASGPPAPARRGAP. Positions 92 to 144 constitute a bHLH domain; the sequence is SRRVKANDRERNRMHNLNAALDALRSVLPSFPDDTKLTKIETLRFAYNYIWAL. Positions 175–209 are disordered; the sequence is GPPSPASDAESWGSGAAAASPLSDPSSPAASEDFT. The span at 180 to 207 shows a compositional bias: low complexity; sequence ASDAESWGSGAAAASPLSDPSSPAASED.

Efficient DNA binding requires dimerization with another bHLH protein. As to expression, expression restricted to the embryonic nervous system.

It is found in the nucleus. Acts as a transcriptional regulator. Involved in the initiation of neuronal differentiation. Activates transcription by binding to the E box (5'-CANNTG-3'). Associates with chromatin to enhancer regulatory elements in genes encoding key transcriptional regulators of neurogenesis. The chain is Neurogenin-1 (NEUROG1) from Homo sapiens (Human).